The chain runs to 347 residues: 3-methyl-2-oxobutanoate hydroxymethyltransferase 1, mitochondrial (347 aa).

The N-terminal 48 residues, 1 to 48 (MASSLTRNCSRFSKAISVRFMSNLPENTVYGGPKPQNPNQRVTLTHLR), are a transit peptide targeting the mitochondrion. Aspartate 83 and aspartate 122 together coordinate Mg(2+). 3-methyl-2-oxobutanoate-binding positions include 83–84 (DS), aspartate 122, and lysine 152. Glutamate 154 contacts Mg(2+). The active-site Proton acceptor is the glutamate 222.

The protein belongs to the PanB family. Requires Mg(2+) as cofactor.

The protein localises to the mitochondrion. It carries out the reaction 3-methyl-2-oxobutanoate + (6R)-5,10-methylene-5,6,7,8-tetrahydrofolate + H2O = 2-dehydropantoate + (6S)-5,6,7,8-tetrahydrofolate. It functions in the pathway cofactor biosynthesis; (R)-pantothenate biosynthesis; (R)-pantoate from 3-methyl-2-oxobutanoate: step 1/2. Functionally, catalyzes the reversible reaction in which hydroxymethyl group from 5,10-methylenetetrahydrofolate is transferred onto alpha-ketoisovalerate to form ketopantoate. The chain is 3-methyl-2-oxobutanoate hydroxymethyltransferase 1, mitochondrial (KPHMT1) from Arabidopsis thaliana (Mouse-ear cress).